A 2089-amino-acid chain; its full sequence is Mediator of DNA damage checkpoint protein 1 (2089 aa).

Positions 1–19 are enriched in acidic residues; sequence MEDTQAIDWDVEEEEETEQ. The interval 1–22 is disordered; it reads MEDTQAIDWDVEEEEETEQSSE. The tract at residues 1 to 150 is interaction with CHEK2; sequence MEDTQAIDWD…SRGPLTVEET (150 aa). Residues 2-220 form an interaction with the MRN complex region; it reads EDTQAIDWDV…PFAFNLNSDT (219 aa). Thr-4 bears the Phosphothreonine; by ATM mark. In terms of domain architecture, FHA spans 54 to 105; the sequence is NVVGRMPDCSVALPFPSISKQHAEIEILAWDKAPILRDCGSLNGTQILRPPK. Position 108 is a phosphoserine (Ser-108). The required for nuclear localization (NLS1) stretch occupies residues 145 to 568; sequence LTVEETPRVQ…PAKLLVVSLE (424 aa). Thr-146 bears the Phosphothreonine mark. The residue at position 168 (Ser-168) is a Phosphoserine; by CK2. Ser-176 carries the post-translational modification Phosphoserine. Disordered stretches follow at residues 185-248, 261-280, and 286-317; these read RTTS…AKQS, DQPLVKERDNDTKVKRGAGN, and GVILERSQPPGEDSDTDVDDDSRPPGRPAEVH. Ser-196 and Ser-218 each carry phosphoserine; by CK2. At Thr-220 the chain carries Phosphothreonine; by CK2. A compositionally biased stretch (basic and acidic residues) spans 261-274; the sequence is DQPLVKERDNDTKV. Position 299 is a phosphoserine; by CK2 (Ser-299). Thr-301 carries the phosphothreonine; by CK2 modification. Over residues 306–317 the composition is skewed to basic and acidic residues; that stretch reads DSRPPGRPAEVH. Ser-329 carries the phosphoserine; by CK2 modification. Thr-331 is modified (phosphothreonine; by CK2). Ser-372 carries the phosphoserine modification. Residue Ser-376 is modified to Phosphoserine; by CK2. Position 378 is a phosphothreonine; by CK2 (Thr-378). A phosphoserine mark is found at Ser-394 and Ser-397. Phosphoserine; by CK2 is present on Ser-402. Residue Thr-404 is modified to Phosphothreonine; by CK2. The residue at position 411 (Ser-411) is a Phosphoserine. Position 449 is a phosphothreonine (Thr-449). Position 453 is a phosphoserine; by CK2 (Ser-453). Residue Thr-455 is modified to Phosphothreonine; by CK2. The disordered stretch occupies residues 482–515; that stretch reads RAHSEKDQPPFGDSDDSVEADKSSPGIHLERSQA. Ser-485, Ser-495, Ser-498, Ser-504, Ser-505, and Ser-513 each carry phosphoserine. Position 523 is a phosphothreonine (Thr-523). Ser-590 carries the post-translational modification Phosphoserine. A Glycyl lysine isopeptide (Lys-Gly) (interchain with G-Cter in SUMO1); alternate cross-link involves residue Lys-616. A Glycyl lysine isopeptide (Lys-Gly) (interchain with G-Cter in SUMO2); alternate cross-link involves residue Lys-616. 2 disordered regions span residues 653-689 and 780-1887; these read DTLGESTQPQREGAQVPTGREREQHVGGTKDSEDNYG and SPPR…TKLN. Residues 671–685 show a composition bias toward basic and acidic residues; it reads GREREQHVGGTKDSE. Phosphoserine occurs at positions 780 and 793. The residue at position 812 (Lys-812) is an N6-acetyllysine. 4 stretches are compositionally biased toward basic and acidic residues: residues 819–844, 851–862, 868–905, and 914–951; these read ETAERVGPERGPLERETEKLLPERQT, ELTKGKQDREQK, DTQRQESDKNGESASPERDRESLKVEIETSEEIQEKQV, and AFEREVERPVANRECDPAELEEKVPKVILERDTQRGEP. Phosphoserine is present on residues Ser-955 and Ser-998. Residues 955–965 are compositionally biased toward polar residues; the sequence is SQDQKGQASSP. The segment covering 1016–1031 has biased composition (basic and acidic residues); that stretch reads KASRIRAAEKVSRGDQ. The residue at position 1033 (Ser-1033) is a Phosphoserine. Pro residues predominate over residues 1040-1051; the sequence is PTVPEAPAPPQK. Phosphoserine occurs at positions 1068 and 1086. Residues 1103-1113 are compositionally biased toward basic residues; sequence PKPKIRTRKSS. Polar residues predominate over residues 1129–1156; the sequence is PSTSTAQPVTPKPTSQATRSRTNRSSVK. Residues 1148 to 1610 form an interaction with the PRKDC complex region; that stretch reads SRTNRSSVKT…TNRSSVKTPE (463 aa). Residue Thr-1157 is modified to Phosphothreonine. Positions 1169-1187 are enriched in polar residues; it reads QPSTSTDQPVTSEPTSQVT. Position 1198 is a phosphothreonine (Thr-1198). Positions 1210–1228 are enriched in polar residues; sequence QPSTSTDRPVTSEPTSQAT. The residue at position 1235 (Ser-1235) is a Phosphoserine. Residue Thr-1239 is modified to Phosphothreonine. Residues 1251–1268 show a composition bias toward polar residues; that stretch reads QPSTSTDQPVTSEPTYQA. 2 positions are modified to phosphothreonine: Thr-1280 and Thr-1302. Low complexity-rich tracts occupy residues 1304-1318 and 1347-1359; these read KPTSRTTRSRTNMSS and TSRTTRSRTNMSS. The segment covering 1375 to 1391 has biased composition (polar residues); the sequence is PSTSTEQPVTPEPTSRA. Phosphoserine is present on residues Ser-1399 and Ser-1400. Residue Lys-1402 is modified to N6-acetyllysine. A Phosphothreonine modification is found at Thr-1403. Residue Lys-1413 forms a Glycyl lysine isopeptide (Lys-Gly) (interchain with G-Cter in SUMO1); alternate linkage. A Glycyl lysine isopeptide (Lys-Gly) (interchain with G-Cter in SUMO2); alternate cross-link involves residue Lys-1413. 4 stretches are compositionally biased toward polar residues: residues 1416–1444, 1456–1475, 1498–1514, and 1538–1555; these read PSTSTDQPVTPEPTSQATRGRTNRSSVKT, QPSTSTDQPVTPEPTSQATR, ASASTDQPVTSEPTSRT, and QPSTSTDQPVTPEPTSRA. 2 positions are modified to phosphothreonine: Thr-1425 and Thr-1466. Thr-1548 is modified (phosphothreonine). Ser-1564 is subject to Phosphoserine. Thr-1567 and Thr-1589 each carry phosphothreonine. Residues 1579–1596 are compositionally biased toward polar residues; it reads QPSTSRNQLVTPEPTSRA. Ser-1604 is modified (phosphoserine). A Phosphothreonine modification is found at Thr-1608. A compositionally biased stretch (pro residues) spans 1611–1620; that stretch reads PVVPTAPEPH. A compositionally biased stretch (polar residues) spans 1624 to 1636; that stretch reads STDQPVTPKLTSR. 3 positions are modified to phosphothreonine: Thr-1630, Thr-1664, and Thr-1671. Residues 1678–1689 are compositionally biased toward polar residues; sequence GGQSKTLRSSTV. The residue at position 1681 (Ser-1681) is a Phosphoserine. A Phosphothreonine modification is found at Thr-1697. Residues 1698–1719 are compositionally biased toward polar residues; the sequence is PEFQSPVTTDQPISPEPITQPS. Residues 1698 to 2089 form a required for nuclear localization (NLS2) region; that stretch reads PEFQSPVTTD…VLSPLEMSST (392 aa). Ser-1702 and Ser-1711 each carry phosphoserine. Lys-1740 is covalently cross-linked (Glycyl lysine isopeptide (Lys-Gly) (interchain with G-Cter in SUMO2)). Ser-1775 is subject to Phosphoserine. A Glycyl lysine isopeptide (Lys-Gly) (interchain with G-Cter in SUMO2) cross-link involves residue Lys-1790. Position 1800 is a phosphothreonine (Thr-1800). Position 1820 is a phosphoserine (Ser-1820). The segment covering 1823–1836 has biased composition (polar residues); sequence HQKQPQRGEVSQKT. Lys-1840 participates in a covalent cross-link: Glycyl lysine isopeptide (Lys-Gly) (interchain with G-Cter in SUMO1); alternate. Lys-1840 is covalently cross-linked (Glycyl lysine isopeptide (Lys-Gly) (interchain with G-Cter in SUMO2); alternate). Over residues 1847–1857 the composition is skewed to basic and acidic residues; the sequence is AEKPGKEEDVV. At Thr-1858 the chain carries Phosphothreonine. BRCT domains follow at residues 1892-1970 and 1991-2082; these read APKV…EYVV and RERR…FVLS. An Omega-N-methylarginine modification is found at Arg-1943.

As to quaternary structure, homodimer. Interacts with H2AX, which requires phosphorylation of H2AX on 'Ser-139'. Interacts with the MRN complex, composed of MRE11, RAD50, and NBN. Interacts with CHEK2, which requires ATM-mediated phosphorylation of 'Thr-68' within the FHA domain of CHEK2. Interacts constitutively with the BRCA1-BARD1 complex, SMC1A and TP53BP1. Interacts with ATM and FANCD2, and these interactions are reduced upon DNA damage. Also interacts with the PRKDC complex, composed of XRCC6/KU70, XRCC5/KU80 and PRKDC/XRCC7. This interaction may be required for PRKDC autophosphorylation, which is essential for DNA double strand break (DSB) repair. When phosphorylated by ATM, interacts with RNF8 (via FHA domain). Interacts with CEP164. When phosphorylated, interacts with APTX (via FHA-like domain). Interacts (when phosphorylated) with TOPBP1; promoting TOPBP1 localization to DNA damage sites during mitosis. Interacts (when phosphorylated) with NBN; promoting NBN and MRN complex localization to DNA damage sites. In terms of processing, phosphorylated upon exposure to ionizing radiation (IR), ultraviolet radiation (UV), and hydroxyurea (HU). Phosphorylation in response to IR requires ATM, NBN, and possibly CHEK2. Also phosphorylated during the G2/M phase of the cell cycle and during activation of the mitotic spindle checkpoint. Phosphorylation at Thr-4 by ATM stabilizes and enhances homodimerization via the FHA domain. Phosphorylated at Ser-168 and Ser-196 by CK2 in response to DNA damage during mitosis, promoting interaction with TOPBP1. Phosphorylated by CK2 in response to DNA damage, promoting interaction with NBN and recruitment of the MRN complex to DNA damage sites. Post-translationally, sumoylation at Lys-1840 by PIAS4 following DNA damage promotes ubiquitin-mediated degradation. Ubiquitinated by RNF4, leading to proteasomal degradation; undergoes 'Lys-48'-linked polyubiquitination. Highly expressed in testis.

The protein resides in the nucleus. The protein localises to the chromosome. Its function is as follows. Histone reader protein required for checkpoint-mediated cell cycle arrest in response to DNA damage within both the S phase and G2/M phases of the cell cycle. Specifically recognizes and binds histone H2AX phosphorylated at 'Ser-139', a marker of DNA damage, serving as a scaffold for the recruitment of DNA repair and signal transduction proteins to discrete foci of DNA damage sites. Also required for downstream events subsequent to the recruitment of these proteins. These include phosphorylation and activation of the ATM, CHEK1 and CHEK2 kinases, and stabilization of TP53/p53 and apoptosis. ATM and CHEK2 may also be activated independently by a parallel pathway mediated by TP53BP1. Required for chromosomal stability during mitosis by promoting recruitment of TOPBP1 to DNA double strand breaks (DSBs): TOPBP1 forms filamentous assemblies that bridge MDC1 and tether broken chromosomes during mitosis. Required for the repair of DSBs via homologous recombination by promoting recruitment of NBN component of the MRN complex to DSBs. The sequence is that of Mediator of DNA damage checkpoint protein 1 from Homo sapiens (Human).